The following is a 256-amino-acid chain: Diacetyl reductase [(S)-acetoin forming] (256 aa).

NAD(+) is bound by residues 6–33 and D59; that span reads LVTGAGQGIGKAIALRLVKDGFAVAIAD. S139 is a substrate binding site. Y152 functions as the Proton acceptor in the catalytic mechanism. Position 156 (K156) interacts with NAD(+).

The protein belongs to the short-chain dehydrogenases/reductases (SDR) family. As to quaternary structure, homotetramer.

It catalyses the reaction (S)-acetoin + NAD(+) = diacetyl + NADH + H(+). In terms of biological role, catalyzes the reversible reduction of (S)-acetoin to 2,3-butanediol in the presence of NADH. The chain is Diacetyl reductase [(S)-acetoin forming] (budC) from Klebsiella pneumoniae.